Here is a 55-residue protein sequence, read N- to C-terminus: Cytochrome c oxidase subunit 7s (55 aa).

The helical transmembrane segment at 13-35 (LVQDIGVALILGSIAGCFFKYGV) threads the bilayer.

Slime mold cytochrome c oxidase consists of at least seven different polypeptides species, subunits I, II, III, IV, V, VI, and VIIe/s in order of MW.

The protein localises to the mitochondrion inner membrane. It carries out the reaction 4 Fe(II)-[cytochrome c] + O2 + 8 H(+)(in) = 4 Fe(III)-[cytochrome c] + 2 H2O + 4 H(+)(out). In terms of biological role, this protein is one of the nuclear-coded polypeptide chains of cytochrome c oxidase, the terminal oxidase in mitochondrial electron transport. The protein is Cytochrome c oxidase subunit 7s (cxgS) of Dictyostelium discoideum (Social amoeba).